A 178-amino-acid polypeptide reads, in one-letter code: Deoxyuridine 5'-triphosphate nucleotidohydrolase (178 aa).

Belongs to the dUTPase family. It depends on Mg(2+) as a cofactor.

It catalyses the reaction dUTP + H2O = dUMP + diphosphate + H(+). The protein operates within pyrimidine metabolism; dUMP biosynthesis; dUMP from dCTP (dUTP route): step 2/2. Functionally, this enzyme is involved in nucleotide metabolism: it produces dUMP, the immediate precursor of thymidine nucleotides and it decreases the intracellular concentration of dUTP so that uracil cannot be incorporated into DNA. The protein is Deoxyuridine 5'-triphosphate nucleotidohydrolase of Fowl adenovirus A serotype 1 (strain CELO / Phelps) (FAdV-1).